Consider the following 138-residue polypeptide: Sec-independent protein translocase protein TatB (138 aa).

The chain crosses the membrane as a helical span at residues 2 to 18 (SFGEIIVILVVAILVLG). Residues 109 to 138 (NNLSGQNLNTEEKPNLSKLETQDKNGKINV) are disordered. Positions 118–138 (TEEKPNLSKLETQDKNGKINV) are enriched in basic and acidic residues.

It belongs to the TatB family. In terms of assembly, the Tat system comprises two distinct complexes: a TatABC complex, containing multiple copies of TatA, TatB and TatC subunits, and a separate TatA complex, containing only TatA subunits. Substrates initially bind to the TatABC complex, which probably triggers association of the separate TatA complex to form the active translocon.

The protein resides in the cell inner membrane. Its function is as follows. Part of the twin-arginine translocation (Tat) system that transports large folded proteins containing a characteristic twin-arginine motif in their signal peptide across membranes. Together with TatC, TatB is part of a receptor directly interacting with Tat signal peptides. TatB may form an oligomeric binding site that transiently accommodates folded Tat precursor proteins before their translocation. The chain is Sec-independent protein translocase protein TatB from Campylobacter jejuni subsp. jejuni serotype O:2 (strain ATCC 700819 / NCTC 11168).